We begin with the raw amino-acid sequence, 655 residues long: p-hydroxybenzoic acid efflux pump subunit AaeB (655 aa).

11 helical membrane-spanning segments follow: residues 13-33, 38-58, 69-89, 93-113, 121-141, 152-172, 370-390, 407-427, 431-451, 459-479, and 482-502; these read FAVK…HFQL, WAVL…GGEP, LRII…ISMI, LLMI…SSLV, WGLS…EPLL, EIVI…PRSI, LFWL…IAVV, FIYG…VIIP, QSML…GIEV, MGAL…TFHF, and FLDS…VILL.

The protein belongs to the aromatic acid exporter ArAE (TC 2.A.85) family.

The protein resides in the cell inner membrane. Its function is as follows. Forms an efflux pump with AaeA. Could function as a metabolic relief valve, allowing to eliminate certain compounds when they accumulate to high levels in the cell. The protein is p-hydroxybenzoic acid efflux pump subunit AaeB of Salmonella arizonae (strain ATCC BAA-731 / CDC346-86 / RSK2980).